A 115-amino-acid polypeptide reads, in one-letter code: Large ribosomal subunit protein bL20 (115 aa).

The protein belongs to the bacterial ribosomal protein bL20 family.

Functionally, binds directly to 23S ribosomal RNA and is necessary for the in vitro assembly process of the 50S ribosomal subunit. It is not involved in the protein synthesizing functions of that subunit. This chain is Large ribosomal subunit protein bL20, found in Synechococcus sp. (strain RCC307).